The chain runs to 291 residues: BTB/POZ domain-containing protein 19 (291 aa).

The BTB domain maps to 29–98 (SDVCFVVGQE…LYTNSVKLYR (70 aa)). The region spanning 134 to 234 (CEALQVAVTF…LALLAPAELS (101 aa)) is the BACK domain.

This chain is BTB/POZ domain-containing protein 19 (BTBD19), found in Homo sapiens (Human).